Here is a 325-residue protein sequence, read N- to C-terminus: Hydroxylase/desaturase poxK (325 aa).

Residues 1 to 12 show a composition bias toward low complexity; sequence MTATATPVPTVA. A disordered region spans residues 1–25; sequence MTATATPVPTVASHAQDITLPPPPK.

It belongs to the asaB hydroxylase/desaturase family.

It participates in secondary metabolite biosynthesis. In terms of biological role, hydroxylase/desaturase; part of the gene cluster that mediates the biosynthesis of oxaleimides, cytotoxic compounds containing an unusual disubstituted succinimide moiety. The first step of the pathway is provided by the HR-PKS poxF that serves in a new mode of collaborative biosynthesis with the PKS-NRPS poxE, by providing the olefin containing amino acid substrate via the synthesis of an ACP-bound dec-4-enoate. The cytochrome P450 monooxygenase poxM-catalyzed oxidation at the alpha-position creates the enzyme-bound 2-hydroxydec-4-enoyl-ACP thioester, which may be prone to spontaneous hydrolysis to yield 2-hydroxydec-4-enoic acid due to increased electrophilicity of the carbonyl. 2-hydroxydec-4-enoic acid can then be further oxidized by poxM to yield the alpha-ketoacid 2-oxodec-4-enoicacid, which is reductively aminated by the aminotransferase poxL to yield (S,E)-2-aminodec-4-enoic acid. The Hybrid PKS-NRPS synthetase poxE then performs condensation between the octaketide product of its PKS modules and the amino group of (S,E)-2-aminodec-4-enoic acid which is activated and incorporated by the adenylation domain. The resulting aminoacyl product can be cyclized by the Diels-Alderase PoxQ and reductively released by the reductive (R) domain of poxE to yield an aldehyde intermediate. The released aldehyde is then substrate for a Knoevenagel condensation by the hydrolyase poxO followed by an oxidation at the 5-position of the pyrrolidone ring. The presence of the olefin from the amino acid building block allows for migration of the substituted allyl group to occur. This allylic transposition reaction takes place in a conjugate addition, semipinacol-like fashion to yield a succinimide intermediate. Iterative two-electron oxidations of the C7 methyl of the succinimide intermediate to the carboxylic acid can be catalyzed by one of two remaining cytochrome P450 monooxygenasess poxC or poxD to yield oxaleimide A. Subsequent oxidation yields the maleimide scaffold oxaleimide I. Both oxaleimide A and oxaleimide I can undergo oxidative modifications in the decalin ring to yield the series of products oxaleimides B to H. This is Hydroxylase/desaturase poxK from Penicillium oxalicum (strain 114-2 / CGMCC 5302) (Penicillium decumbens).